The following is a 61-amino-acid chain: MAKSSLKAKQKKHAKFSTRAYTRCELCGRVHAVLRKYKICRICFRELAHQGKIPGMKKASW.

Positions 24, 27, 40, and 43 each coordinate Zn(2+).

This sequence belongs to the universal ribosomal protein uS14 family. Zinc-binding uS14 subfamily. Part of the 30S ribosomal subunit. Contacts proteins S3 and S10. Zn(2+) serves as cofactor.

Binds 16S rRNA, required for the assembly of 30S particles and may also be responsible for determining the conformation of the 16S rRNA at the A site. This is Small ribosomal subunit protein uS14 from Mycoplasmopsis agalactiae (strain NCTC 10123 / CIP 59.7 / PG2) (Mycoplasma agalactiae).